Consider the following 204-residue polypeptide: 3,4-dihydroxy-2-butanone 4-phosphate synthase (204 aa).

Glu-30 lines the Mg(2+) pocket. Position 34 (Asp-34) interacts with D-ribulose 5-phosphate. An S-glutathionyl cysteine modification is found at Cys-59. Residues Thr-85 and 142 to 146 each bind D-ribulose 5-phosphate; that span reads RRGHT. Residue His-145 coordinates Mg(2+).

As to quaternary structure, homodimer. The cofactor is Mg(2+). Mn(2+) serves as cofactor. S-glutathionylation is reversible and dependent on a glutaredoxin.

It carries out the reaction D-ribulose 5-phosphate = (2S)-2-hydroxy-3-oxobutyl phosphate + formate + H(+). It functions in the pathway cofactor biosynthesis; riboflavin biosynthesis; 2-hydroxy-3-oxobutyl phosphate from D-ribulose 5-phosphate: step 1/1. Functionally, catalyzes the conversion of D-ribulose 5-phosphate to formate and 3,4-dihydroxy-2-butanone 4-phosphate. The protein is 3,4-dihydroxy-2-butanone 4-phosphate synthase (RIB3) of Candida albicans (strain SC5314 / ATCC MYA-2876) (Yeast).